The primary structure comprises 295 residues: Inward rectifier potassium channel Kirbac3.1 (295 aa).

The Cytoplasmic portion of the chain corresponds to 1–47 (MTGGMKPPARKPRILNSDGSSNITRLGLEKRGWLDDHYHDLLTVSWP). The helical transmembrane segment at 48–69 (VFITLITGLYLVTNALFALAYL) threads the bilayer. Residues 70–82 (ACGDVIENARPGS) lie on the Extracellular side of the membrane. The helical; Pore-forming intramembrane region spans 83–95 (FTDAFFFSVQTMA). The Selectivity filter motif lies at 96–100 (TIGYG). A helical membrane pass occupies residues 107–131 (PLANTLVTLEALCGMLGLAVAASLI). Over 132 to 295 (YARFTRPTAG…DLGKFHEIAQ (164 aa)) the chain is Cytoplasmic.

Belongs to the inward rectifier-type potassium channel (TC 1.A.2.1) family. KCNJ11 subfamily. In terms of assembly, homotetramer.

It is found in the membrane. Functionally, inward rectifier potassium channel that mediates potassium uptake into the cell. Inward rectifier potassium channels are characterized by a greater tendency to allow potassium to flow into the cell rather than out of it. The inward rectification may be achieved by the blockage of outward current by cytoplasmic divalent metal ions and polyamines. Complements an E.coli mutant that is defective in K(+) uptake. The chain is Inward rectifier potassium channel Kirbac3.1 from Paramagnetospirillum magnetotacticum (Aquaspirillum magnetotacticum).